The chain runs to 274 residues: 4-diphosphocytidyl-2-C-methyl-D-erythritol kinase (274 aa).

Residue Lys8 is part of the active site. 94–104 (PSGAGLGGGSA) provides a ligand contact to ATP. The active site involves Asp136.

This sequence belongs to the GHMP kinase family. IspE subfamily.

It catalyses the reaction 4-CDP-2-C-methyl-D-erythritol + ATP = 4-CDP-2-C-methyl-D-erythritol 2-phosphate + ADP + H(+). Its pathway is isoprenoid biosynthesis; isopentenyl diphosphate biosynthesis via DXP pathway; isopentenyl diphosphate from 1-deoxy-D-xylulose 5-phosphate: step 3/6. Functionally, catalyzes the phosphorylation of the position 2 hydroxy group of 4-diphosphocytidyl-2C-methyl-D-erythritol. This Bacteroides fragilis (strain ATCC 25285 / DSM 2151 / CCUG 4856 / JCM 11019 / LMG 10263 / NCTC 9343 / Onslow / VPI 2553 / EN-2) protein is 4-diphosphocytidyl-2-C-methyl-D-erythritol kinase.